A 1746-amino-acid chain; its full sequence is Non-reducing polyketide synthase ptaA (1746 aa).

The interval 4–227 is N-terminal acylcarrier protein transacylase domain (SAT); that stretch reads NSGSGTSPWG…ALPVYGGLCH (224 aa). Residues 361-796 form the Ketosynthase family 3 (KS3) domain; it reads QSKIAIVGMS…GGNTTIAIEE (436 aa). Catalysis depends on for beta-ketoacyl synthase activity residues C534, H670, and H714. The tract at residues 898–1218 is malonyl-CoA:ACP transacylase (MAT) domain; that stretch reads FAFTGQGASY…LGALHLAGIP (321 aa). The tract at residues 1286–1605 is product template (PT) domain; that stretch reads TSTVHRVIGE…RLLLDRFFSA (320 aa). The segment at 1290–1425 is N-terminal hotdog fold; it reads HRVIGETFDG…ATLFYGKAND (136 aa). The 311-residue stretch at 1290 to 1600 folds into the PKS/mFAS DH domain; sequence HRVIGETFDG…FRRYPRLLLD (311 aa). H1322 (proton acceptor; for dehydratase activity) is an active-site residue. The interval 1452 to 1600 is C-terminal hotdog fold; it reads VANRFSRNMA…FRRYPRLLLD (149 aa). Catalysis depends on D1511, which acts as the Proton donor; for dehydratase activity. The 75-residue stretch at 1671-1745 folds into the Carrier domain; that stretch reads DSITVKAMAL…DLRAWLLEYY (75 aa). Position 1705 is an O-(pantetheine 4'-phosphoryl)serine (S1705).

It carries out the reaction holo-[ACP] + 8 malonyl-CoA + 8 H(+) = atrochrysone carboxyl-[ACP] + 8 CO2 + 8 CoA + 2 H2O. Its pathway is secondary metabolite biosynthesis. Functionally, non-reducing polyketide synthase; part of the gene cluster that mediates the biosynthesis of pestheic acid, a diphenyl ether which is a biosynthetic precursor of the unique chloropupukeananes. The biosynthesis initiates from condensation of acetate and malonate units catalyzed by the non-reducing PKS ptaA. As the ptaA protein is TE/CLC domain-deficient, hydrolysis and Claisen cyclization of the polyketide could be catalyzed by ptaB containing a beta-lactamase domain. The ptaB protein might hydrolyze the thioester bond between the ACP of ptaA and the intermediate to release atrochrysone carboxylic acid, which is spontaneously dehydrated to form endocrocin anthrone. Endocrocin anthrone is then converted to endocrocin, catalyzed by the anthrone oxygenase ptaC. Spontaneous decarboxylation of endocrocin occurs to generate emodin. An O-methyltransferase (ptaH or ptaI) could methylate emodin to form physcion. PtaJ could then catalyze the oxidative cleavage of physcion, and rotation of the intermediate could then afford desmethylisosulochrin. PtaF, a putative NADH-dependent oxidoreductase, might also participate in the oxidative cleavage step. Desmethylisosulochrin is then transformed by another O-methyltransferase (ptaH or ptaI) to form isosulochrin. Chlorination of isosulochrin by ptaM in the cyclohexadienone B ring then produces chloroisosulochrin. PtaE is responsible for the oxidative coupling reactions of both benzophenones isosulochrin and chloroisosulochrin to RES-1214-1 and pestheic acid respectively, regardless of chlorination. The polypeptide is Non-reducing polyketide synthase ptaA (Pestalotiopsis fici (strain W106-1 / CGMCC3.15140)).